The sequence spans 118 residues: Small ribosomal subunit protein uS13 (118 aa).

Residues 92–118 are disordered; sequence RRSLPVRGQRTKTNARTRKGPRKPIKK.

Belongs to the universal ribosomal protein uS13 family. As to quaternary structure, part of the 30S ribosomal subunit. Forms a loose heterodimer with protein S19. Forms two bridges to the 50S subunit in the 70S ribosome.

Its function is as follows. Located at the top of the head of the 30S subunit, it contacts several helices of the 16S rRNA. In the 70S ribosome it contacts the 23S rRNA (bridge B1a) and protein L5 of the 50S subunit (bridge B1b), connecting the 2 subunits; these bridges are implicated in subunit movement. Contacts the tRNAs in the A and P-sites. In Acinetobacter baumannii (strain AB307-0294), this protein is Small ribosomal subunit protein uS13.